The primary structure comprises 354 residues: Uroporphyrinogen decarboxylase (354 aa).

Residues 27 to 31 (RQAGR), Asp-77, Tyr-154, Thr-209, and His-327 each bind substrate.

This sequence belongs to the uroporphyrinogen decarboxylase family. Homodimer.

The protein localises to the cytoplasm. It catalyses the reaction uroporphyrinogen III + 4 H(+) = coproporphyrinogen III + 4 CO2. It functions in the pathway porphyrin-containing compound metabolism; protoporphyrin-IX biosynthesis; coproporphyrinogen-III from 5-aminolevulinate: step 4/4. Its function is as follows. Catalyzes the decarboxylation of four acetate groups of uroporphyrinogen-III to yield coproporphyrinogen-III. The sequence is that of Uroporphyrinogen decarboxylase from Pseudomonas putida (strain ATCC 700007 / DSM 6899 / JCM 31910 / BCRC 17059 / LMG 24140 / F1).